We begin with the raw amino-acid sequence, 504 residues long: Cytochrome P450 7A1 (504 aa).

A helical membrane pass occupies residues 4-24; it reads TSLIWGIAIAACCCLWLILGI. Cys-444 contributes to the heme binding site.

This sequence belongs to the cytochrome P450 family. The cofactor is heme. In terms of tissue distribution, detected in liver.

Its subcellular location is the endoplasmic reticulum membrane. It localises to the microsome membrane. The catalysed reaction is cholesterol + reduced [NADPH--hemoprotein reductase] + O2 = 7alpha-hydroxycholesterol + oxidized [NADPH--hemoprotein reductase] + H2O + H(+). It carries out the reaction 4beta-hydroxycholesterol + reduced [NADPH--hemoprotein reductase] + O2 = 4beta,7alpha-dihydroxycholesterol + oxidized [NADPH--hemoprotein reductase] + H2O + H(+). It catalyses the reaction lathosterol + reduced [NADPH--hemoprotein reductase] + O2 = 7alpha,8alpha-epoxy-5alpha-cholestan-3beta-ol + oxidized [NADPH--hemoprotein reductase] + H2O + H(+). The enzyme catalyses lathosterol + reduced [NADPH--hemoprotein reductase] + O2 = 5alpha-cholestan-7-oxo-3beta-ol + oxidized [NADPH--hemoprotein reductase] + H2O + H(+). The catalysed reaction is 7-dehydrocholesterol + reduced [NADPH--hemoprotein reductase] + O2 = 7-oxocholesterol + oxidized [NADPH--hemoprotein reductase] + H2O + H(+). It carries out the reaction (24S)-hydroxycholesterol + reduced [NADPH--hemoprotein reductase] + O2 = (24S)-7alpha-dihydroxycholesterol + oxidized [NADPH--hemoprotein reductase] + H2O + H(+). It catalyses the reaction (24R)-hydroxycholesterol + reduced [NADPH--hemoprotein reductase] + O2 = (24R)-7alpha-dihydroxycholesterol + oxidized [NADPH--hemoprotein reductase] + H2O + H(+). The protein operates within lipid metabolism; bile acid biosynthesis. It participates in steroid metabolism; cholesterol degradation. In terms of biological role, a cytochrome P450 monooxygenase involved in the metabolism of endogenous cholesterol and its oxygenated derivatives (oxysterols). Mechanistically, uses molecular oxygen inserting one oxygen atom into a substrate, and reducing the second into a water molecule, with two electrons provided by NADPH via cytochrome P450 reductase (CPR; NADPH-ferrihemoprotein reductase). Functions as a critical regulatory enzyme of bile acid biosynthesis and cholesterol homeostasis. Catalyzes the hydroxylation of carbon hydrogen bond at 7-alpha position of cholesterol, a rate-limiting step in cholesterol catabolism and bile acid biosynthesis. 7-alpha hydroxylates several oxysterols, including 4beta-hydroxycholesterol and 24-hydroxycholesterol. Catalyzes the oxidation of the 7,8 double bond of 7-dehydrocholesterol and lathosterol with direct and predominant formation of the 7-keto derivatives. In Homo sapiens (Human), this protein is Cytochrome P450 7A1.